Reading from the N-terminus, the 124-residue chain is Small ribosomal subunit protein uS12 (124 aa).

The tract at residues 8-28 is disordered; it reads IRSAREKTDKKTKSPALKSCP. Residues 10-19 are compositionally biased toward basic and acidic residues; that stretch reads SAREKTDKKT. At aspartate 89 the chain carries 3-methylthioaspartic acid.

This sequence belongs to the universal ribosomal protein uS12 family. Part of the 30S ribosomal subunit. Contacts proteins S8 and S17. May interact with IF1 in the 30S initiation complex.

Functionally, with S4 and S5 plays an important role in translational accuracy. Its function is as follows. Interacts with and stabilizes bases of the 16S rRNA that are involved in tRNA selection in the A site and with the mRNA backbone. Located at the interface of the 30S and 50S subunits, it traverses the body of the 30S subunit contacting proteins on the other side and probably holding the rRNA structure together. The combined cluster of proteins S8, S12 and S17 appears to hold together the shoulder and platform of the 30S subunit. The chain is Small ribosomal subunit protein uS12 from Arthrospira platensis (Spirulina platensis).